The sequence spans 511 residues: uncharacterized protein (511 aa).

14 consecutive transmembrane segments (helical) span residues 7 to 27, 46 to 66, 80 to 100, 107 to 127, 134 to 154, 163 to 183, 200 to 220, 226 to 246, 266 to 286, 301 to 321, 329 to 349, 357 to 377, 394 to 414, and 437 to 457; these read WVIS…NTAL, VNPI…GPLL, LPVF…ALMA, GAAT…SFPI, LLVL…LGTI, WLFF…YFFL, AGIL…IFLQ, SGYV…LLIV, VLGL…LSAF, LILL…LSAL, GMLG…WLHI, MFAA…AAGL, TAVQ…IGFF, and LFFI…CMNA. Residues 465 to 486 form a disordered region; the sequence is AHKPHDKAKTAPEKPAVSAQGL.

This sequence belongs to the major facilitator superfamily.

Its subcellular location is the cell membrane. This is an uncharacterized protein from Bacillus subtilis (strain 168).